Here is a 328-residue protein sequence, read N- to C-terminus: 4-hydroxythreonine-4-phosphate dehydrogenase (328 aa).

Residues H135 and T136 each contribute to the substrate site. H165, H210, and H265 together coordinate a divalent metal cation. The substrate site is built by K273, N282, and R291.

It belongs to the PdxA family. Homodimer. The cofactor is Zn(2+). Mg(2+) is required as a cofactor. It depends on Co(2+) as a cofactor.

It localises to the cytoplasm. The enzyme catalyses 4-(phosphooxy)-L-threonine + NAD(+) = 3-amino-2-oxopropyl phosphate + CO2 + NADH. It functions in the pathway cofactor biosynthesis; pyridoxine 5'-phosphate biosynthesis; pyridoxine 5'-phosphate from D-erythrose 4-phosphate: step 4/5. Functionally, catalyzes the NAD(P)-dependent oxidation of 4-(phosphooxy)-L-threonine (HTP) into 2-amino-3-oxo-4-(phosphooxy)butyric acid which spontaneously decarboxylates to form 3-amino-2-oxopropyl phosphate (AHAP). This is 4-hydroxythreonine-4-phosphate dehydrogenase from Enterobacter sp. (strain 638).